The primary structure comprises 614 residues: Pentatricopeptide repeat-containing protein At1g63080, mitochondrial (614 aa).

A mitochondrion-targeting transit peptide spans 1–7 (MSLAKRF). 15 PPR repeats span residues 64–98 (SIVEFSKLLSAIAKMKKFDLVISFGEKMEILGVSH), 99–133 (NLYTYNIMINCLCRRSQLSFALAILGKMMKLGYGP), 134–168 (SIVTLNSLLNGFCHGNRISEAVALVDQMVEMGYQP), 169–203 (DTVTFTTLVHGLFQHNKASEAVALVERMVVKGCQP), 204–238 (DLVTYGAVINGLCKRGEPDLALNLLNKMEKGKIEA), 239–273 (DVVIYSTVIDSLCKYRHVDDALNLFTEMDNKGIRP), 274–308 (DVFTYSSLISCLCNYGRWSDASRLLSDMLERKINP), 309–343 (NVVTFNSLIDAFAKEGKLIEAEKLFDEMIQRSIDP), 344–378 (NIVTYNSLINGFCMHDRLDEAQQIFTLMVSKDCLP), 379–413 (DVVTYNTLINGFCKAKKVVDGMELFRDMSRRGLVG), 414–448 (NTVTYTTLIHGFFQASDCDNAQMVFKQMVSDGVHP), 449–483 (NIMTYNTLLDGLCKNGKLEKAMVVFEYLQKSKMEP), 484–518 (DIYTYNIMSEGMCKAGKVEDGWDLFCSLSLKGVKP), 519–553 (DVIAYNTMISGFCKKGLKEEAYTLFIKMKEDGPLP), and 554–588 (DSGTYNTLIRAHLRDGDKAASAELIKEMRSCRFAG).

This sequence belongs to the PPR family. P subfamily.

The protein resides in the mitochondrion. This Arabidopsis thaliana (Mouse-ear cress) protein is Pentatricopeptide repeat-containing protein At1g63080, mitochondrial.